The following is a 266-amino-acid chain: Putative pyruvate, phosphate dikinase regulatory protein (266 aa).

149–156 (GVSRTSKT) is an ADP binding site.

The protein belongs to the pyruvate, phosphate/water dikinase regulatory protein family. PDRP subfamily.

The catalysed reaction is N(tele)-phospho-L-histidyl/L-threonyl-[pyruvate, phosphate dikinase] + ADP = N(tele)-phospho-L-histidyl/O-phospho-L-threonyl-[pyruvate, phosphate dikinase] + AMP + H(+). It catalyses the reaction N(tele)-phospho-L-histidyl/O-phospho-L-threonyl-[pyruvate, phosphate dikinase] + phosphate + H(+) = N(tele)-phospho-L-histidyl/L-threonyl-[pyruvate, phosphate dikinase] + diphosphate. Bifunctional serine/threonine kinase and phosphorylase involved in the regulation of the pyruvate, phosphate dikinase (PPDK) by catalyzing its phosphorylation/dephosphorylation. In Geobacillus thermodenitrificans (strain NG80-2), this protein is Putative pyruvate, phosphate dikinase regulatory protein.